The chain runs to 437 residues: Serine carboxypeptidase-like 17 (437 aa).

An N-terminal signal peptide occupies residues 1–26 (MGKECYYLSWILKFHLLLVLIQLVDS). 3 disulfides stabilise this stretch: Cys85-Cys327, Cys249-Cys263, and Cys287-Cys293. Residue Asn106 is glycosylated (N-linked (GlcNAc...) asparagine). Residue Ser181 is part of the active site. Residue Asp362 is part of the active site. The N-linked (GlcNAc...) asparagine glycan is linked to Asn378. His415 is an active-site residue.

The protein belongs to the peptidase S10 family. Expressed in seedlings and siliques.

The protein resides in the secreted. Probable carboxypeptidase. The protein is Serine carboxypeptidase-like 17 (SCPL17) of Arabidopsis thaliana (Mouse-ear cress).